A 624-amino-acid chain; its full sequence is MNMKGQETRGFQSEVKQLLHLMIHSLYSNKEIFLRELISNASDAADKLRFRALSNPELFEGDGELRVRLSFDKEKRTLTLSDNGIGMTRDEVIDNLGTIAKSGTKAFLESIGSDQAKDSQLIGQFGVGFYSAFIVADKVTVRTRAAGAPADTGVFWESAGEGDYTIADITKDERGTEITLHLREGEDEYLDDWRLRSVISKYSDHIALPVEIQVKNEEDGTVTWEKINKAQALWTRGKAEISDDEYKAFYKHIAHDFTDPLSWSHNRVEGKQEYTSLLYIPAQAPWDMWNRDHKHGLKLYVQRVFIMDEAEQFMPNYLRFVRGLIDSNDLPLNVSREILQDSRITQNLRSALTKRVLQMLEKLAKDDAEKYQQFWQQFGMALKEGPAEDGSNKETIAKLLRFASTHTDSSAQTVSLEDYVSRMAEGQEKIYYITADSYAAAKSSPHLELFRKKGIEVLLLSDRIDEWMMSYLTEFEGKAFQSVSKADDSLNKLADEENPEQQEAEKALEPFVERVKTLLGERVKDVRLTHRLTDTPAIVTTDADEMSTQMAKLFAAAGQQAPEVKYIFELNPDHGLVKRAAEVTDDTQFAQWVELLLDQALLAERGTLEDPNQFIRRMNQLLTA.

Residues 1 to 336 are a; substrate-binding; the sequence is MNMKGQETRG…SNDLPLNVSR (336 aa). Residues 337-552 form a b region; it reads EILQDSRITQ…ADEMSTQMAK (216 aa). The c stretch occupies residues 553–624; it reads LFAAAGQQAP…IRRMNQLLTA (72 aa).

This sequence belongs to the heat shock protein 90 family. Homodimer.

It is found in the cytoplasm. Functionally, molecular chaperone. Has ATPase activity. This Yersinia pestis bv. Antiqua (strain Antiqua) protein is Chaperone protein HtpG.